The following is an 80-amino-acid chain: Serine palmitoyltransferase small subunit B (80 aa).

Topologically, residues 1 to 11 (MDVKHIKDYLS) are cytoplasmic. The chain crosses the membrane as a helical span at residues 12-29 (WLYYQYLLITCSYVLEPW). At 30–36 (EQSIFNT) the chain is on the lumenal side. A helical transmembrane segment spans residues 37-57 (LLLTIIAMVIYSSYIFIPIHV). At 58–80 (RLAVEFFSGIFGGQHESTVALMS) the chain is on the cytoplasmic side.

Belongs to the SPTSS family. SPTSSB subfamily. In terms of assembly, component of the serine palmitoyltransferase (SPT) complex, which is composed of SPTLC1, SPTLC2 or SPTLC3 and SPTSSA or SPTSSB. The heterodimer consisting of SPTLC1 and SPTLC2/SPTLC3 forms the catalytic core of the enzyme, while SPTSSA or SPTSSB subunits determine substrate specificity. SPT also interacts with ORMDL proteins, especially ORMDL3, which negatively regulate SPT activity in the presence of ceramides.

It is found in the endoplasmic reticulum membrane. Its pathway is lipid metabolism; sphingolipid metabolism. Functionally, component of the serine palmitoyltransferase multisubunit enzyme (SPT) that catalyzes the initial and rate-limiting step in sphingolipid biosynthesis by condensing L-serine and activated acyl-CoA (most commonly palmitoyl-CoA) to form long-chain bases. The SPT complex is composed of SPTLC1, SPTLC2 or SPTLC3 and SPTSSA or SPTSSB. Within this complex, the heterodimer consisting of SPTLC1 and SPTLC2/SPTLC3 forms the catalytic core. Within the SPT complex, SPTSSB stimulates the catalytic activity and plays a role in substrate specificity. SPT complexes with this subunit showing a preference for longer acyl-CoAs. The SPTLC1-SPTLC2-SPTSSB complex shows a strong preference for C18-CoA substrate, while the SPTLC1-SPTLC3-SPTSSB isozyme displays an ability to use a broader range of acyl-CoAs, without apparent preference. The chain is Serine palmitoyltransferase small subunit B (sptssb) from Xenopus tropicalis (Western clawed frog).